Reading from the N-terminus, the 633-residue chain is Pesticidal crystal protein Cry2Ab (633 aa).

Belongs to the delta endotoxin family.

Its function is as follows. Promotes colloidosmotic lysis by binding to the midgut epithelial cells of lepidopteran (Manduca sexta) larvae. The chain is Pesticidal crystal protein Cry2Ab (cry2Ab) from Bacillus thuringiensis subsp. kurstaki.